Consider the following 382-residue polypeptide: Lycopene beta-cyclase (382 aa).

Residue 6–36 (DLILVGAGLANGLIALRLQQQQPDMRILLID) coordinates NAD(+).

It belongs to the lycopene cyclase family. It depends on FAD as a cofactor.

It is found in the cell inner membrane. The catalysed reaction is a carotenoid psi-end group = a carotenoid beta-end derivative. The enzyme catalyses all-trans-lycopene = gamma-carotene. It catalyses the reaction gamma-carotene = all-trans-beta-carotene. It carries out the reaction all-trans-neurosporene = beta-zeacarotene. The catalysed reaction is beta-zeacarotene = 7,8-dihydro-beta-carotene. It participates in carotenoid biosynthesis; beta-carotene biosynthesis. Activity is increased in the presence of NAD(P)H. NADPH is not involved directly in the cyclization reaction, but must play an indirect role, e.g. as an allosteric activator. In terms of biological role, catalyzes the double cyclization reaction which converts lycopene to beta-carotene. Also catalyzes the double cyclization reaction which converts neurosporene to 7,8-dihydro-beta-carotene via monocyclic beta-zeacarotene. May also convert zeta-carotene to bicyclic 7,8,7',8'-tetrahydro-beta-carotene. The protein is Lycopene beta-cyclase of Pantoea ananas (Erwinia uredovora).